Here is a 364-residue protein sequence, read N- to C-terminus: Ribosomal RNA small subunit methyltransferase H (364 aa).

Residues 55-57, aspartate 75, phenylalanine 101, aspartate 122, and glutamine 129 each bind S-adenosyl-L-methionine; that span reads GGH. Residues 333–364 are disordered; sequence LPPGGGAGFVKAGRVPGEPVRGTRAGSKGRRR.

It belongs to the methyltransferase superfamily. RsmH family.

The protein localises to the cytoplasm. It catalyses the reaction cytidine(1402) in 16S rRNA + S-adenosyl-L-methionine = N(4)-methylcytidine(1402) in 16S rRNA + S-adenosyl-L-homocysteine + H(+). Its function is as follows. Specifically methylates the N4 position of cytidine in position 1402 (C1402) of 16S rRNA. The protein is Ribosomal RNA small subunit methyltransferase H of Bordetella bronchiseptica (strain ATCC BAA-588 / NCTC 13252 / RB50) (Alcaligenes bronchisepticus).